The sequence spans 320 residues: Elongation factor Ts (320 aa).

The involved in Mg(2+) ion dislocation from EF-Tu stretch occupies residues 82–85; that stretch reads TDFV.

This sequence belongs to the EF-Ts family.

It is found in the cytoplasm. In terms of biological role, associates with the EF-Tu.GDP complex and induces the exchange of GDP to GTP. It remains bound to the aminoacyl-tRNA.EF-Tu.GTP complex up to the GTP hydrolysis stage on the ribosome. The protein is Elongation factor Ts of Flavobacterium johnsoniae (strain ATCC 17061 / DSM 2064 / JCM 8514 / BCRC 14874 / CCUG 350202 / NBRC 14942 / NCIMB 11054 / UW101) (Cytophaga johnsonae).